Here is a 333-residue protein sequence, read N- to C-terminus: Olfactory receptor 9S13 (333 aa).

Topologically, residues 1–35 (MATAVHRNGSLTPVSLRVFVLVGFGGGALTQALLF) are extracellular. The N-linked (GlcNAc...) asparagine glycan is linked to N8. A helical membrane pass occupies residues 36 to 56 (AVFLVLYVVTVLGNLTMIVVI). Topologically, residues 57–72 (TLDARLHSPMYFFLKN) are cytoplasmic. The chain crosses the membrane as a helical span at residues 73–93 (LSFVDLCYSSAIAPNALANFL). The Extracellular portion of the chain corresponds to 94–106 (STSKVISFEACAT). A disulfide bridge links C104 with C196. Residues 107-127 (QFFFFSLLATTETFLLAVMAY) form a helical membrane-spanning segment. Topologically, residues 128 to 150 (DRFMAICSPLRYPVTMCPTTCTR) are cytoplasmic. Residues 151–171 (LVLGTFCVGCLNSIVQTSLTF) form a helical membrane-spanning segment. Topologically, residues 172–203 (QLPFCSSNRIDHFYCDVPPLLQLACASTALNE) are extracellular. The chain crosses the membrane as a helical span at residues 204 to 224 (LFLFGLCGFIIVSTTLAVLVS). At 225–251 (YGYITVTILRMHSGSGRHKVFSTCGSH) the chain is on the cytoplasmic side. The helical transmembrane segment at 252-272 (LTAVSLFYGTLFVMYAQPGAL) threads the bilayer. Residues 273-278 (TSMEQG) lie on the Extracellular side of the membrane. The chain crosses the membrane as a helical span at residues 279–299 (KVVSIFYTLVIPMLNPLIYSL). The Cytoplasmic segment spans residues 300 to 333 (RNKDVKDALQRLGQRHSLVKAVRGCPAAGGNASV).

Belongs to the G-protein coupled receptor 1 family.

It localises to the cell membrane. Functionally, odorant receptor. This Mus musculus (Mouse) protein is Olfactory receptor 9S13.